The sequence spans 261 residues: Cytochrome c oxidase subunit 3 (261 aa).

Residues 1–15 (MTHQTHAYHMVNPSP) are Mitochondrial matrix-facing. A helical transmembrane segment spans residues 16 to 34 (WPLTGALSALLMTSGLVMW). The Mitochondrial intermembrane portion of the chain corresponds to 35–40 (FHYHST). A helical membrane pass occupies residues 41–66 (ILVLLGLLTNILTMYQWWRDVVREGT). The Mitochondrial matrix portion of the chain corresponds to 67–72 (FQGHHT). A helical membrane pass occupies residues 73–105 (PTVQKGLRYGMVLFIISEVFFFAGFFWAFYHSS). Residues 106–128 (LAPTPELGGCWPPTGIHPLDPME) are Mitochondrial intermembrane-facing. The chain crosses the membrane as a helical span at residues 129 to 152 (VPLLNTSVLLASGVTITWAHHSLM). The Mitochondrial matrix segment spans residues 153-155 (EGN). The chain crosses the membrane as a helical span at residues 156–183 (RKQMLQALFITISLGIYFTLLQASEYHE). Topologically, residues 184 to 190 (ASFSISD) are mitochondrial intermembrane. The helical transmembrane segment at 191–223 (GIYGSTFFMATGFHGLHVIIGSTFLAVCFLRQL) threads the bilayer. At 224–232 (KFHFTSNHH) the chain is on the mitochondrial matrix side. A helical transmembrane segment spans residues 233–256 (FGFEAAAWYWHFVDVVWLFLYVSI). The Mitochondrial intermembrane segment spans residues 257–261 (YWWGS).

This sequence belongs to the cytochrome c oxidase subunit 3 family. As to quaternary structure, component of the cytochrome c oxidase (complex IV, CIV), a multisubunit enzyme composed of 14 subunits. The complex is composed of a catalytic core of 3 subunits MT-CO1, MT-CO2 and MT-CO3, encoded in the mitochondrial DNA, and 11 supernumerary subunits COX4I, COX5A, COX5B, COX6A, COX6B, COX6C, COX7A, COX7B, COX7C, COX8 and NDUFA4, which are encoded in the nuclear genome. The complex exists as a monomer or a dimer and forms supercomplexes (SCs) in the inner mitochondrial membrane with NADH-ubiquinone oxidoreductase (complex I, CI) and ubiquinol-cytochrome c oxidoreductase (cytochrome b-c1 complex, complex III, CIII), resulting in different assemblies (supercomplex SCI(1)III(2)IV(1) and megacomplex MCI(2)III(2)IV(2)).

The protein localises to the mitochondrion inner membrane. The enzyme catalyses 4 Fe(II)-[cytochrome c] + O2 + 8 H(+)(in) = 4 Fe(III)-[cytochrome c] + 2 H2O + 4 H(+)(out). Component of the cytochrome c oxidase, the last enzyme in the mitochondrial electron transport chain which drives oxidative phosphorylation. The respiratory chain contains 3 multisubunit complexes succinate dehydrogenase (complex II, CII), ubiquinol-cytochrome c oxidoreductase (cytochrome b-c1 complex, complex III, CIII) and cytochrome c oxidase (complex IV, CIV), that cooperate to transfer electrons derived from NADH and succinate to molecular oxygen, creating an electrochemical gradient over the inner membrane that drives transmembrane transport and the ATP synthase. Cytochrome c oxidase is the component of the respiratory chain that catalyzes the reduction of oxygen to water. Electrons originating from reduced cytochrome c in the intermembrane space (IMS) are transferred via the dinuclear copper A center (CU(A)) of subunit 2 and heme A of subunit 1 to the active site in subunit 1, a binuclear center (BNC) formed by heme A3 and copper B (CU(B)). The BNC reduces molecular oxygen to 2 water molecules using 4 electrons from cytochrome c in the IMS and 4 protons from the mitochondrial matrix. The sequence is that of Cytochrome c oxidase subunit 3 (MT-CO3) from Dugong dugon (Dugong).